A 501-amino-acid polypeptide reads, in one-letter code: MRSDAIKRRLYSKAIFIIPFWILSIALWFSSGSVYKIDSCMIDNNKTTCIPYTISKYTDFNSNSQLNQFNSSFILFQIIPINILCFLPLLGYMYILASVLKVDLVKKAFTIFGIMMLITIPLFLIVSICIFPLNLRETLCSDLKNGFIKSNIVDKGNTTICNLKESFNYFKGSFSDTTTTTTTTTTLEWGITYNWYFIIATIVFSFSMLVIVLVLLIKDANTLNNGDGQNYSLFEQENDENFEDDDPNDVIESGLDLWGRNIWYNYTKKPMNSILLSIFQLFYIGSYFSLYYFGFKFNLIPFFINLIILFISYYNLIFDGIRDNYLIKRMYRERSNDVNQFIERVKKIKPKVAIVKKPNKEGGKSSSGGGGGGGGGIDDGIEAILEPRLLKSWLDQSELDYLMINDDDDKYKPIVELTIIEDFKTTSQLPIDAISLLFVKTDLSNYYIITNKKKRFIQINRGLHSFLVLIGLSGLFNILYLKRLILKKSITIKTLFEYNNR.

The next 7 helical transmembrane spans lie at Ala14 to Val34, Phe73 to Met93, Ile111 to Phe131, Phe197 to Ile217, Ile274 to Gly294, Phe297 to Ile317, and Phe466 to Leu486.

The protein resides in the membrane. This is an uncharacterized protein from Dictyostelium discoideum (Social amoeba).